A 497-amino-acid polypeptide reads, in one-letter code: Glycerol kinase (497 aa).

Residue Thr13 participates in ADP binding. Thr13, Thr14, and Ser15 together coordinate ATP. Sn-glycerol 3-phosphate is bound at residue Thr13. Arg17 serves as a coordination point for ADP. Sn-glycerol 3-phosphate-binding residues include Arg83, Glu84, and Tyr135. Glycerol contacts are provided by Arg83, Glu84, and Tyr135. A Phosphohistidine; by HPr modification is found at His231. Asp245 serves as a coordination point for sn-glycerol 3-phosphate. Positions 245 and 246 each coordinate glycerol. Positions 267 and 310 each coordinate ADP. Thr267, Gly310, Gln314, and Gly411 together coordinate ATP. Residues Gly411 and Asn415 each coordinate ADP.

This sequence belongs to the FGGY kinase family. As to quaternary structure, homotetramer and homodimer (in equilibrium). In terms of processing, the phosphoenolpyruvate-dependent sugar phosphotransferase system (PTS), including enzyme I, and histidine-containing protein (HPr) are required for the phosphorylation, which leads to the activation of the enzyme.

The catalysed reaction is glycerol + ATP = sn-glycerol 3-phosphate + ADP + H(+). Its pathway is polyol metabolism; glycerol degradation via glycerol kinase pathway; sn-glycerol 3-phosphate from glycerol: step 1/1. Its activity is regulated as follows. Activated by phosphorylation and inhibited by fructose 1,6-bisphosphate (FBP). Key enzyme in the regulation of glycerol uptake and metabolism. Catalyzes the phosphorylation of glycerol to yield sn-glycerol 3-phosphate. The sequence is that of Glycerol kinase from Listeria monocytogenes serovar 1/2a (strain ATCC BAA-679 / EGD-e).